The following is a 476-amino-acid chain: Serine carboxypeptidase 2 (476 aa).

A signal peptide spans 1–34 (MRTTTRRLPPAPAAAAVLLAALTCLLLRPAAVAA). Cystine bridges form between C97–C353, C254–C266, and C290–C320. 2 N-linked (GlcNAc...) asparagine glycosylation sites follow: N148 and N159. The active site involves S190. The N-linked (GlcNAc...) asparagine glycan is linked to N291. Residues 295–313 (SSSSSSLSRRRTRGRYPWL) constitute a propeptide, linker peptide. T314 bears the Blocked amino end (Thr) mark. N-linked (GlcNAc...) asparagine glycans are attached at residues N341 and N347. The N-linked (GlcNAc...) asparagine; partial glycan is linked to N352. O-linked (GalNAc...) threonine; in variant 351-AT-352 glycosylation occurs at N352. Active-site residues include D390 and H443. N472 is a glycosylation site (N-linked (GlcNAc...) asparagine).

Belongs to the peptidase S10 family. Carboxypeptidase II is a dimer, where each monomer is composed of two chains linked by a disulfide bond.

The protein localises to the secreted. The enzyme catalyses Preferential release of a C-terminal arginine or lysine residue.. May be involved in the degradation of small peptides (2-5 residues) or in the degradation of storage proteins in the embryo. The sequence is that of Serine carboxypeptidase 2 (CBP2) from Hordeum vulgare (Barley).